We begin with the raw amino-acid sequence, 253 residues long: MEIQDYTDSEFKHALARNLRSLTRGKKSSKQPIAILLGGQSGAGKTTIHRIKQKEFQGNIVIIDGDSFRSQHPHYLELQQEYGKDSVEYTKDFAGKMVESLVTKLSSLRYNLLIEGTLRTVDVPKKTAQLLKNKGYEVQLALIATKPELSYLSTLIRYEELYIINPNQARATPKEHHDFIVNHLVDNTRKLEELAIFERIQIYQRDRSCVYDSKENTTSAADVLQELLFGEWSQVEKEMLQVGEKRLNELLEK.

39-46 (GQSGAGKT) is a binding site for ATP. The active-site Proton acceptor is the aspartate 66.

The protein belongs to the zeta toxin family. Forms a PezA(2)PezT(2) heterotetramer. The heterotetramer is much more stable than either of the proteins alone, and a specific mechanism may be necessary to liberate the toxin.

It carries out the reaction UDP-N-acetyl-alpha-D-glucosamine + ATP = UDP-N-acetyl-alpha-D-glucosamine 3'-phosphate + ADP + H(+). Functionally, toxic component of a type II toxin-antitoxin (TA) system. Phosphorylates UDP-N-acetyl-D-glucosamine (UNAG) on the 3'-hydroxyl group of the N-acetyl-D-glucosamine moiety, yielding UNAG-3P. UNAG-3P inhibits MurA, the first committed step in cell wall synthesis, which is then blocked. Upon expression in E.coli results in decreased cell growth and viability, followed 3 hours later by growth restoration; the toxic effect and phosphorylation of UNAG are neutralized by coexpression with cognate antitoxin PezA. A mutant lacking the last 11 residues is stably maintained in E.coli, unlike the wild-type which undergoes spontaneous mutation. Expression of the deletion mutant in rapidly growing liquid cultures leads to cell bulging, permeabilization and massive lysis by 1 hour. Cells that survive are not able to undergo cytokinesis. Expression in slowly growing cells leads to bulging but not lysis. Acts as a corepressor of its own operon with PezA; it is not clear if it binds DNA alone. The chain is Toxin PezT (pezT) from Streptococcus pneumoniae serotype 4 (strain ATCC BAA-334 / TIGR4).